A 411-amino-acid chain; its full sequence is MAVKVNEYYSLIQNNYLFVEIARRVDEYQKENPDANLIKMGIGDVTRPLAKSVVEAFKRAVDELGDADTFRGYGPEQGYDFLIEDVIENDYKPLGVELKNSEVFISDGAKCDTGNFQELFSKDNIIAVTDPVYPVYVDSNVMAGRSGKMGEDGFYENIVYLPATSENDFVPSLPSEKVDIIYLCYPNNPTGTTLTKEQLKEWVDYAHENDALILFDAAYESFIKTPGIPHSIFEIEGAKDVAVEFRSYSKVAGFTGTRCAYCVVPEEVYVKDANGNKVQLNPLWNRRQSTKFNGVSYPVQRAAQAIYTPEGKKEIQENLDYYVKNAQVIRESLEKMGLKVYGGVDSPYIWFKTPNDIDSWSFFDILLKEAHVVSTPGAGFGPSGEGYLRLTAFNTYENTVEAMDRISKLEF.

Substrate contacts are provided by Y16 and G43. Residues Y73, 109–110 (AK), Y133, N188, Y219, and 247–249 (SYS) contribute to the pyridoxal 5'-phosphate site. Positions 110, 133, and 188 each coordinate substrate. N6-(pyridoxal phosphate)lysine is present on K250. Pyridoxal 5'-phosphate-binding residues include R258 and N293. 2 residues coordinate substrate: N293 and R389.

The protein belongs to the class-I pyridoxal-phosphate-dependent aminotransferase family. LL-diaminopimelate aminotransferase subfamily. Homodimer. Pyridoxal 5'-phosphate is required as a cofactor.

It catalyses the reaction (2S,6S)-2,6-diaminopimelate + 2-oxoglutarate = (S)-2,3,4,5-tetrahydrodipicolinate + L-glutamate + H2O + H(+). It participates in amino-acid biosynthesis; L-lysine biosynthesis via DAP pathway; LL-2,6-diaminopimelate from (S)-tetrahydrodipicolinate (aminotransferase route): step 1/1. Functionally, involved in the synthesis of meso-diaminopimelate (m-DAP or DL-DAP), required for both lysine and peptidoglycan biosynthesis. Catalyzes the direct conversion of tetrahydrodipicolinate to LL-diaminopimelate. This Methanosphaera stadtmanae (strain ATCC 43021 / DSM 3091 / JCM 11832 / MCB-3) protein is LL-diaminopimelate aminotransferase.